The sequence spans 317 residues: Aspartate carbamoyltransferase catalytic subunit (317 aa).

Carbamoyl phosphate-binding residues include R66 and T67. K94 provides a ligand contact to L-aspartate. Positions 116, 144, and 147 each coordinate carbamoyl phosphate. Residues R177 and R231 each contribute to the L-aspartate site. Carbamoyl phosphate is bound by residues G272 and P273.

It belongs to the aspartate/ornithine carbamoyltransferase superfamily. ATCase family. Heterododecamer (2C3:3R2) of six catalytic PyrB chains organized as two trimers (C3), and six regulatory PyrI chains organized as three dimers (R2).

The catalysed reaction is carbamoyl phosphate + L-aspartate = N-carbamoyl-L-aspartate + phosphate + H(+). It functions in the pathway pyrimidine metabolism; UMP biosynthesis via de novo pathway; (S)-dihydroorotate from bicarbonate: step 2/3. Its function is as follows. Catalyzes the condensation of carbamoyl phosphate and aspartate to form carbamoyl aspartate and inorganic phosphate, the committed step in the de novo pyrimidine nucleotide biosynthesis pathway. The sequence is that of Aspartate carbamoyltransferase catalytic subunit from Nitrobacter hamburgensis (strain DSM 10229 / NCIMB 13809 / X14).